A 232-amino-acid chain; its full sequence is Ubiquinone biosynthesis O-methyltransferase (232 aa).

S-adenosyl-L-methionine is bound by residues Arg-36, Gly-55, Asp-76, and Met-120.

The protein belongs to the methyltransferase superfamily. UbiG/COQ3 family.

The catalysed reaction is a 3-demethylubiquinol + S-adenosyl-L-methionine = a ubiquinol + S-adenosyl-L-homocysteine + H(+). It carries out the reaction a 3-(all-trans-polyprenyl)benzene-1,2-diol + S-adenosyl-L-methionine = a 2-methoxy-6-(all-trans-polyprenyl)phenol + S-adenosyl-L-homocysteine + H(+). It functions in the pathway cofactor biosynthesis; ubiquinone biosynthesis. O-methyltransferase that catalyzes the 2 O-methylation steps in the ubiquinone biosynthetic pathway. This is Ubiquinone biosynthesis O-methyltransferase from Burkholderia multivorans (strain ATCC 17616 / 249).